A 380-amino-acid chain; its full sequence is F-box protein At4g18380 (380 aa).

Positions 22 to 70 constitute an F-box domain; that stretch reads IDHFDNLPDSILLLIFNNIGDVKALGRCSVVSKRFHSLIPQVENVFVRV.

The polypeptide is F-box protein At4g18380 (Arabidopsis thaliana (Mouse-ear cress)).